We begin with the raw amino-acid sequence, 672 residues long: Transketolase (672 aa).

H35 lines the substrate pocket. Residues H75 and 124 to 126 (GPL) contribute to the thiamine diphosphate site. D162 contributes to the Mg(2+) binding site. Thiamine diphosphate contacts are provided by G163 and N192. Mg(2+)-binding residues include N192 and I194. Substrate contacts are provided by H266, R361, and S388. H266 serves as a coordination point for thiamine diphosphate. E415 (proton donor) is an active-site residue. F441 is a thiamine diphosphate binding site. Substrate is bound by residues H465, D473, and R524.

This sequence belongs to the transketolase family. In terms of assembly, homodimer. It depends on Mg(2+) as a cofactor. The cofactor is Ca(2+). Requires Mn(2+) as cofactor. Co(2+) is required as a cofactor. Thiamine diphosphate serves as cofactor.

It carries out the reaction D-sedoheptulose 7-phosphate + D-glyceraldehyde 3-phosphate = aldehydo-D-ribose 5-phosphate + D-xylulose 5-phosphate. Its pathway is carbohydrate biosynthesis; Calvin cycle. It participates in carbohydrate degradation; pentose phosphate pathway. In terms of biological role, catalyzes the transfer of a two-carbon ketol group from a ketose donor to an aldose acceptor, via a covalent intermediate with the cofactor thiamine pyrophosphate. In Rhodobacter capsulatus (strain ATCC BAA-309 / NBRC 16581 / SB1003), this protein is Transketolase (tktA).